The primary structure comprises 411 residues: Serine hydroxymethyltransferase (411 aa).

Residues Leu-119 and 123–125 (GHL) each bind (6S)-5,6,7,8-tetrahydrofolate. Lys-228 is modified (N6-(pyridoxal phosphate)lysine). 351–353 (SPF) is a binding site for (6S)-5,6,7,8-tetrahydrofolate.

It belongs to the SHMT family. As to quaternary structure, homodimer. Pyridoxal 5'-phosphate serves as cofactor.

Its subcellular location is the cytoplasm. The enzyme catalyses (6R)-5,10-methylene-5,6,7,8-tetrahydrofolate + glycine + H2O = (6S)-5,6,7,8-tetrahydrofolate + L-serine. It participates in one-carbon metabolism; tetrahydrofolate interconversion. The protein operates within amino-acid biosynthesis; glycine biosynthesis; glycine from L-serine: step 1/1. Catalyzes the reversible interconversion of serine and glycine with tetrahydrofolate (THF) serving as the one-carbon carrier. This reaction serves as the major source of one-carbon groups required for the biosynthesis of purines, thymidylate, methionine, and other important biomolecules. Also exhibits THF-independent aldolase activity toward beta-hydroxyamino acids, producing glycine and aldehydes, via a retro-aldol mechanism. This chain is Serine hydroxymethyltransferase, found in Clostridium botulinum (strain Alaska E43 / Type E3).